The sequence spans 156 residues: AP-1 complex subunit sigma-1 (156 aa).

Belongs to the adaptor complexes small subunit family. As to quaternary structure, adapter protein complex 1 (AP-1) is a heterotetramer composed of two large adaptins (gamma-type subunit APL4 and beta-type subunit APL2), a medium adaptin (mu-type subunit APM1) and a small adaptin (sigma-type subunit APS1). AP-1 interacts with clathrin. Also a component of the AP-1R complex composed of at least APM2, APL4 and APS1.

The protein resides in the cytoplasm. Its subcellular location is the nucleus. It is found in the cytoplasmic vesicle. It localises to the clathrin-coated vesicle membrane. The protein localises to the endosome. The protein resides in the golgi apparatus. In terms of biological role, component of the adapter complexes which link clathrin to receptors in coated vesicles. Clathrin-associated protein complexes are believed to interact with the cytoplasmic tails of membrane proteins, leading to their selection and concentration. AP19 is probably a subunit of the Golgi membrane adapter. Component of the AP-1-related (AP-1R) complex, an adapter protein complex that mediates sorting of cargo SNARE SNC1. In contrast to the APM1-containing AP-1 complex, AP-1R is incapable of sorting CHS3. The polypeptide is AP-1 complex subunit sigma-1 (APS1) (Saccharomyces cerevisiae (strain ATCC 204508 / S288c) (Baker's yeast)).